Reading from the N-terminus, the 158-residue chain is Cyclic pyranopterin monophosphate synthase (158 aa).

Substrate contacts are provided by residues 75 to 77 (LCH) and 113 to 114 (ME). Asp-128 is an active-site residue.

The protein belongs to the MoaC family. In terms of assembly, homohexamer; trimer of dimers.

It catalyses the reaction (8S)-3',8-cyclo-7,8-dihydroguanosine 5'-triphosphate = cyclic pyranopterin phosphate + diphosphate. It functions in the pathway cofactor biosynthesis; molybdopterin biosynthesis. Catalyzes the conversion of (8S)-3',8-cyclo-7,8-dihydroguanosine 5'-triphosphate to cyclic pyranopterin monophosphate (cPMP). This chain is Cyclic pyranopterin monophosphate synthase, found in Ralstonia nicotianae (strain ATCC BAA-1114 / GMI1000) (Ralstonia solanacearum).